The sequence spans 188 residues: Ribosome maturation factor RimM (188 aa).

Positions 96 to 169 (DDEFYYADLE…TLLIDPLAAG (74 aa)) constitute a PRC barrel domain.

It belongs to the RimM family. Binds ribosomal protein uS19.

The protein localises to the cytoplasm. An accessory protein needed during the final step in the assembly of 30S ribosomal subunit, possibly for assembly of the head region. Essential for efficient processing of 16S rRNA. May be needed both before and after RbfA during the maturation of 16S rRNA. It has affinity for free ribosomal 30S subunits but not for 70S ribosomes. In Rhizobium etli (strain ATCC 51251 / DSM 11541 / JCM 21823 / NBRC 15573 / CFN 42), this protein is Ribosome maturation factor RimM.